Consider the following 1008-residue polypeptide: Retinoblastoma-related protein (1008 aa).

The disordered stretch occupies residues Lys-375–Pro-394. A compositionally biased stretch (polar residues) spans Ser-380–Leu-392. Positions Thr-404–Leu-605 are domain A. Residues Thr-404–Pro-853 are pocket. The tract at residues Thr-606–Glu-722 is spacer. Residues Thr-723 to Pro-853 are domain B. 2 disordered regions span residues Lys-865–Asp-899 and Leu-988–Glu-1008.

This sequence belongs to the retinoblastoma protein (RB) family.

It is found in the nucleus. Functionally, regulator of biological processes that recruits a histone deacetylase to control gene transcription. May play a role in the entry into mitosis, negatively regulating the cell proliferation. Formation of stable complexes with geminiviridae replication-associated proteins may create a cellular environment which favors viral DNA replication. The polypeptide is Retinoblastoma-related protein (RBR) (Pilosella officinarum (Mouse-ear hawkweed)).